We begin with the raw amino-acid sequence, 333 residues long: Taste receptor type 2 member 38 (333 aa).

The Extracellular segment spans residues 1–17; it reads MLTLTRICAVSYEVRST. A helical transmembrane segment spans residues 18–38; it reads FLFISVLEFAVGFLTNAFIFL. Over 39 to 55 the chain is Cytoplasmic; sequence VNFWDVVKRQPLSNSDC. The chain crosses the membrane as a helical span at residues 56 to 76; it reads VLLCLSISRLFLHGLLFLSAI. Topologically, residues 77 to 94 are extracellular; that stretch reads QLTHFQKLSEPLNHSYQA. Residues 95-115 form a helical membrane-spanning segment; that stretch reads IIMLWIIANQANLWLAACLSL. Over 116–142 the chain is Cytoplasmic; that stretch reads LYCSKLIRFSHTFLICLASWVSRKISQ. Residues 143–163 form a helical membrane-spanning segment; the sequence is MLLGIILCSCICTVLCVWCFF. Residues 164–190 lie on the Extracellular side of the membrane; it reads SRPHFTVTTFLFMNNNTRLNWQIKDLN. An N-linked (GlcNAc...) asparagine glycan is attached at asparagine 178. The helical transmembrane segment at 191 to 211 threads the bilayer; the sequence is LFYSFLFCYLWSVPPFLLFLV. The Cytoplasmic segment spans residues 212 to 251; that stretch reads SSGMLTVSLGRHMRTMKVYTRDSRDPSLEAHIKALKSLVS. The chain crosses the membrane as a helical span at residues 252–272; sequence FFCFFVISSCAAFISVPLLIL. The Extracellular portion of the chain corresponds to 273–276; the sequence is WRNK. A helical transmembrane segment spans residues 277–297; the sequence is IGVMVCVGIMAACPSGHAAVL. Topologically, residues 298–333 are cytoplasmic; that stretch reads ISGNATLRRAVTTILLWAQSSMKVRADHKADSRTLC.

The protein belongs to the G-protein coupled receptor T2R family.

It is found in the membrane. Functionally, receptor that may play a role in the perception of bitterness and is gustducin-linked. May play a role in sensing the chemical composition of the gastrointestinal content. The activity of this receptor may stimulate alpha gustducin, mediate PLC-beta-2 activation and lead to the gating of TRPM5. The protein is Taste receptor type 2 member 38 (TAS2R38) of Pongo pygmaeus (Bornean orangutan).